The primary structure comprises 331 residues: Elongation factor Ts, mitochondrial (331 aa).

The tract at residues 254–295 (SPLTVGEMPEVREEEGEKKDGDKQDEEERSTDSDEDETQMLR) is disordered. Basic and acidic residues predominate over residues 262 to 275 (PEVREEEGEKKDGD). Positions 276–291 (KQDEEERSTDSDEDET) are enriched in acidic residues.

It belongs to the EF-Ts family.

The protein localises to the mitochondrion. Functionally, associates with the EF-Tu.GDP complex and induces the exchange of GDP to GTP. It remains bound to the aminoacyl-tRNA.EF-Tu.GTP complex up to the GTP hydrolysis stage on the ribosome. This Branchiostoma floridae (Florida lancelet) protein is Elongation factor Ts, mitochondrial.